Here is a 189-residue protein sequence, read N- to C-terminus: Putative manganese efflux pump MntP (189 aa).

6 consecutive transmembrane segments (helical) span residues 2 to 22 (SLTE…AVSI), 36 to 56 (ILQM…IGYY), 71 to 91 (WIAF…SITA), 106 to 126 (LLLV…VSLS), 132 to 152 (ILYS…AAIL), and 167 to 187 (IVGG…HMFF).

This sequence belongs to the MntP (TC 9.B.29) family.

The protein resides in the cell membrane. Probably functions as a manganese efflux pump. The sequence is that of Putative manganese efflux pump MntP from Ruminiclostridium cellulolyticum (strain ATCC 35319 / DSM 5812 / JCM 6584 / H10) (Clostridium cellulolyticum).